We begin with the raw amino-acid sequence, 121 residues long: Large ribosomal subunit protein uL18 (121 aa).

The protein belongs to the universal ribosomal protein uL18 family. As to quaternary structure, part of the 50S ribosomal subunit; part of the 5S rRNA/L5/L18/L25 subcomplex. Contacts the 5S and 23S rRNAs.

Its function is as follows. This is one of the proteins that bind and probably mediate the attachment of the 5S RNA into the large ribosomal subunit, where it forms part of the central protuberance. The sequence is that of Large ribosomal subunit protein uL18 from Leptothrix cholodnii (strain ATCC 51168 / LMG 8142 / SP-6) (Leptothrix discophora (strain SP-6)).